The primary structure comprises 320 residues: Serpentine receptor class gamma-17 (320 aa).

The next 6 membrane-spanning stretches (helical) occupy residues 25-45 (AIYF…ISLL), 80-100 (IFFG…STFF), 155-175 (FIML…QVIA), 192-212 (WASL…FTIV), 237-257 (FTSI…LTFA), and 268-288 (YILQ…IMFL).

It belongs to the nematode receptor-like protein srg family.

The protein localises to the membrane. The chain is Serpentine receptor class gamma-17 (srg-17) from Caenorhabditis elegans.